Consider the following 379-residue polypeptide: MARRRAFPAFALRLWSILPCLLLLRADAGQPPEESLYLWIDAHQARVLIGFEEDILIVSEGKMAPFTHDFRKAQQRMPAIPVNIHSMNFTWQAAGQAEYFYEFLSLRSLDKGIMADPTVNVPLLGTVPHKASVVQVGFPCLGKQDGVAAFEVNVIVMNSEGNTILRTPQNAIFFKTCQQAECPGGCRNGGFCNERRVCECPDGFYGPHCEKALCIPRCMNGGLCVTPGFCICPPGFYGVNCDKANCSTTCFNGGTCFYPGKCICPPGLEGEQCELSKCPQPCRNGGKCIGKSKCKCPKGYQGDLCSKPVCEPGCGAHGTCHEPNKCQCREGWHGRHCNKRYGASLMHAPRPAGAGLERHTPSLKKAEDRRDPPESNYIW.

An N-terminal signal peptide occupies residues 1–28 (MARRRAFPAFALRLWSILPCLLLLRADA). One can recognise a WIF domain in the interval 38–177 (LWIDAHQARV…PQNAIFFKTC (140 aa)). N88 carries N-linked (GlcNAc...) asparagine glycosylation. Intrachain disulfides connect C140-C177, C182-C192, C186-C198, C200-C209, C214-C224, C218-C230, and C232-C241. 5 EGF-like domains span residues 178–210 (QQAE…PHCE), 211–242 (KALC…VNCD), 243–271 (KANC…LEGE), 274–306 (ELSK…DLCS), and 307–338 (KPVC…RHCN). N245 carries an N-linked (GlcNAc...) asparagine glycan. Disulfide bonds link C246–C256, C250–C262, C278–C288, C282–C294, C296–C305, C310–C320, C314–C326, and C328–C337. Residues 348–379 (APRPAGAGLERHTPSLKKAEDRRDPPESNYIW) are disordered. The segment covering 356–373 (LERHTPSLKKAEDRRDPP) has biased composition (basic and acidic residues).

In terms of assembly, interacts with MYOC. Expression highest in heart and lung. Lower in brain and eye.

The protein resides in the secreted. Binds to WNT proteins and inhibits their activities. May be involved in mesoderm segmentation. This is Wnt inhibitory factor 1 (Wif1) from Mus musculus (Mouse).